The following is an 879-amino-acid chain: Phosphoinositide 3-kinase regulatory subunit 5 (879 aa).

Positions 23–100 are heterodimerization; the sequence is SGSTDISSNW…APYIPETSDL (78 aa). Disordered stretches follow at residues 314–345 and 570–590; these read SLEDDVTEEDEEVDFEEVDDKDEDGGKSPKQD and SSSTNAPMTNAESPLKSPSPS. Positions 315-336 are enriched in acidic residues; that stretch reads LEDDVTEEDEEVDFEEVDDKDE. Over residues 570-589 the composition is skewed to polar residues; the sequence is SSSTNAPMTNAESPLKSPSP. Residues 651-751 are interaction with beta-gamma G protein dimers; sequence PILADMVLYY…WSNGEKVCTS (101 aa).

As to quaternary structure, heterodimer. Interacts with a catalytic subunit and with beta-gamma G protein dimers.

The protein resides in the nucleus. Its subcellular location is the cytoplasm. The protein localises to the cell membrane. Its activity is regulated as follows. Greatly activated by G gamma proteins. Functionally, regulatory subunit of the PI3K gamma complex. Required for recruitment of the catalytic subunit to the plasma membrane via interaction with beta-gamma G protein dimers. Required for G protein-mediated activation of PIK3CG. The polypeptide is Phosphoinositide 3-kinase regulatory subunit 5 (pik3r5) (Xenopus laevis (African clawed frog)).